We begin with the raw amino-acid sequence, 320 residues long: Malate dehydrogenase (320 aa).

NAD(+) is bound by residues 10-15 (GSGMIG) and D34. Residues R83 and R89 each contribute to the substrate site. NAD(+) is bound by residues N96 and 119–121 (ITN). Substrate contacts are provided by N121 and R152. H176 functions as the Proton acceptor in the catalytic mechanism.

Belongs to the LDH/MDH superfamily. MDH type 3 family.

The catalysed reaction is (S)-malate + NAD(+) = oxaloacetate + NADH + H(+). Catalyzes the reversible oxidation of malate to oxaloacetate. The chain is Malate dehydrogenase from Rhizobium etli (strain CIAT 652).